The sequence spans 479 residues: Polyadenylate-binding protein-interacting protein 1 (479 aa).

Residues 1–114 (MSDGFDRAPG…PQQNSESAMA (114 aa)) form a disordered region. N-acetylalanine is present on S2. The span at 11–33 (AGRGRSRGLGRGGGGPEGGGFPN) shows a compositional bias: gly residues. Residue R21 is modified to Omega-N-methylarginine. A compositionally biased stretch (pro residues) spans 45 to 69 (PPQPKAPGFLQPPPLRQPRTTPPPG). The span at 98-111 (PSSQDKIPQQNSES) shows a compositional bias: polar residues. The tract at residues 116-143 (PQVVVAPVLMSKLSVNAPEFYPSGYSSS) is PABPC1-interacting motif-2 (PAM2). The segment at 157-375 (TLSEYVQDFL…LLKLVELRSS (219 aa)) is PAIP1 middle domain (PAIP1M). The MIF4G domain occupies 159–376 (SEYVQDFLNH…LKLVELRSSN (218 aa)). The interval 435 to 455 (DYEENGTDLSGAGDPYLDDID) is disordered. The tract at residues 440-479 (GTDLSGAGDPYLDDIDDEMDPEIEEAYEKFCLESERKRKQ) is PABPC1-interacting motif-1 (PAM1).

In terms of assembly, interacts with the RRM1-RRM2 and C-terminus regions of PABPC1 in a 1:1 stoichiometry. Interacts with EIF4A. (Microbial infection) Interacts (via PAIP1M) with human SARS coronaviruses SARS-COV and SARS-COV-2 NSP3 protein (via SARS-unique domain); the interaction increases binding affinity with PABPC1.

It localises to the cytoplasm. Acts as a coactivator in the regulation of translation initiation of poly(A)-containing mRNAs. Its stimulatory activity on translation is mediated via its action on PABPC1. Competes with PAIP2 for binding to PABPC1. Its association with EIF4A and PABPC1 may potentiate contacts between mRNA termini. May also be involved in translationally coupled mRNA turnover. Implicated with other RNA-binding proteins in the cytoplasmic deadenylation/translational and decay interplay of the FOS mRNA mediated by the major coding-region determinant of instability (mCRD) domain. Its function is as follows. (Microbial infection) Upon interaction with SARS coronavirus SARS-CoV NSP3 protein, plays an important role in viral protein synthesis. In Homo sapiens (Human), this protein is Polyadenylate-binding protein-interacting protein 1.